The following is a 243-amino-acid chain: 1-(5-phosphoribosyl)-5-[(5-phosphoribosylamino)methylideneamino] imidazole-4-carboxamide isomerase (243 aa).

D14 serves as the catalytic Proton acceptor. The Proton donor role is filled by D135.

It belongs to the HisA/HisF family.

It is found in the cytoplasm. The catalysed reaction is 1-(5-phospho-beta-D-ribosyl)-5-[(5-phospho-beta-D-ribosylamino)methylideneamino]imidazole-4-carboxamide = 5-[(5-phospho-1-deoxy-D-ribulos-1-ylimino)methylamino]-1-(5-phospho-beta-D-ribosyl)imidazole-4-carboxamide. It functions in the pathway amino-acid biosynthesis; L-histidine biosynthesis; L-histidine from 5-phospho-alpha-D-ribose 1-diphosphate: step 4/9. The chain is 1-(5-phosphoribosyl)-5-[(5-phosphoribosylamino)methylideneamino] imidazole-4-carboxamide isomerase from Rubrobacter xylanophilus (strain DSM 9941 / JCM 11954 / NBRC 16129 / PRD-1).